Reading from the N-terminus, the 571-residue chain is 5' exonuclease Apollo (571 aa).

2 disordered regions span residues T346 to N386 and M431 to D487. 2 stretches are compositionally biased toward basic and acidic residues: residues N367 to N386 and E453 to P468. Residues M470–D487 show a composition bias toward polar residues. A TBM motif is present at residues N501–E532.

It belongs to the DNA repair metallo-beta-lactamase (DRMBL) family. Interacts with terf2; the interaction is direct.

It localises to the chromosome. The protein localises to the telomere. Its subcellular location is the nucleus. It catalyses the reaction a beta-lactam + H2O = a substituted beta-amino acid. In terms of biological role, 5'-3' exonuclease that plays a central role in telomere maintenance and protection during S-phase. Participates in the protection of telomeres against non-homologous end-joining (NHEJ)-mediated repair, thereby ensuring that telomeres do not fuse. Plays a key role in telomeric loop (T loop) formation by being recruited by terf2 at the leading end telomeres and by processing leading-end telomeres immediately after their replication via its exonuclease activity: generates 3' single-stranded overhang at the leading end telomeres avoiding blunt leading-end telomeres that are vulnerable to end-joining reactions and expose the telomere end in a manner that activates the DNA repair pathways. Possesses beta-lactamase activity, catalyzing the hydrolysis of penicillin G and nitrocefin. Exhibits no activity towards other beta-lactam antibiotic classes including cephalosporins (cefotaxime) and carbapenems (imipenem). This Danio rerio (Zebrafish) protein is 5' exonuclease Apollo (dclre1b).